The primary structure comprises 209 residues: MQVILLERVAKLGQMGEVVDVKPGYARNYLLPQGKALNASEANIAQFEAQKAQLEARNLETRKEAEAMAEKLDGQQFIVIRSASDAGALYGSVTTRDAAEAATADGFSLDRKQVSLSRPIKELGLHTVHVTLHPEVTADIVLNVARSAEEAELQASGKSIQELAAEAEAEAEFEIAELFDDIGSAASEDSDLVETPEDRATEEAEDEQP.

The tract at residues 184–209 is disordered; that stretch reads SAASEDSDLVETPEDRATEEAEDEQP.

The protein belongs to the bacterial ribosomal protein bL9 family.

Binds to the 23S rRNA. In Dinoroseobacter shibae (strain DSM 16493 / NCIMB 14021 / DFL 12), this protein is Large ribosomal subunit protein bL9.